Reading from the N-terminus, the 453-residue chain is Ribosomal protein uS12 methylthiotransferase RimO (453 aa).

Residues 5–120 (PKVGFVSLGC…VMQAVHSHLP (116 aa)) form the MTTase N-terminal domain. [4Fe-4S] cluster contacts are provided by C14, C50, C79, C151, C155, and C158. Residues 137 to 382 (LTPRHYAYLK…MEVAEEVSAN (246 aa)) enclose the Radical SAM core domain. One can recognise a TRAM domain in the interval 385-453 (QRKIGKTLKV…ADGHDLWGEV (69 aa)).

Belongs to the methylthiotransferase family. RimO subfamily. [4Fe-4S] cluster is required as a cofactor.

It is found in the cytoplasm. It carries out the reaction L-aspartate(89)-[ribosomal protein uS12]-hydrogen + (sulfur carrier)-SH + AH2 + 2 S-adenosyl-L-methionine = 3-methylsulfanyl-L-aspartate(89)-[ribosomal protein uS12]-hydrogen + (sulfur carrier)-H + 5'-deoxyadenosine + L-methionine + A + S-adenosyl-L-homocysteine + 2 H(+). Catalyzes the methylthiolation of an aspartic acid residue of ribosomal protein uS12. The polypeptide is Ribosomal protein uS12 methylthiotransferase RimO (Burkholderia orbicola (strain MC0-3)).